Reading from the N-terminus, the 319-residue chain is tRNA N6-adenosine threonylcarbamoyltransferase (319 aa).

Positions 110 and 114 each coordinate Fe cation. Residues 132–136 (VVSGG), Asp165, Gly178, Asp182, and Asn271 each bind substrate. Asp300 contributes to the Fe cation binding site.

This sequence belongs to the KAE1 / TsaD family. The cofactor is Fe(2+).

The protein resides in the cytoplasm. The catalysed reaction is L-threonylcarbamoyladenylate + adenosine(37) in tRNA = N(6)-L-threonylcarbamoyladenosine(37) in tRNA + AMP + H(+). Required for the formation of a threonylcarbamoyl group on adenosine at position 37 (t(6)A37) in tRNAs that read codons beginning with adenine. Is involved in the transfer of the threonylcarbamoyl moiety of threonylcarbamoyl-AMP (TC-AMP) to the N6 group of A37, together with TsaE and TsaB. TsaD likely plays a direct catalytic role in this reaction. This chain is tRNA N6-adenosine threonylcarbamoyltransferase, found in Mycoplasma capricolum subsp. capricolum (strain California kid / ATCC 27343 / NCTC 10154).